The chain runs to 804 residues: Phosphatidylinositol 4-kinase beta (804 aa).

The PIK helical domain maps to 55-245; that stretch reads LEKVKMIHGS…GTKLRKLILS (191 aa). Disordered regions lie at residues 69–122 and 251–309; these read LDKV…ARRR and AHKK…EPVR. Composition is skewed to polar residues over residues 91 to 103 and 281 to 300; these read KLTN…TSSR and DATV…SNPK. In terms of domain architecture, PI3K/PI4K catalytic spans 523–789; the sequence is EPWEEKVRRI…MVDGSMRSIT (267 aa). Residues 529–535 form a G-loop region; the sequence is VRRIREG. Positions 656 to 664 are catalytic loop; it reads QVKDRHNGN. Residues 675–699 are activation loop; sequence HIDFGFILSSSPRNLGFETSAFKLT.

The protein belongs to the PI3/PI4-kinase family. Type III PI4K subfamily. Mg(2+) is required as a cofactor. The cofactor is Mn(2+).

The protein localises to the endomembrane system. The protein resides in the mitochondrion outer membrane. Its subcellular location is the rough endoplasmic reticulum membrane. The catalysed reaction is a 1,2-diacyl-sn-glycero-3-phospho-(1D-myo-inositol) + ATP = a 1,2-diacyl-sn-glycero-3-phospho-(1D-myo-inositol 4-phosphate) + ADP + H(+). Its function is as follows. Phosphorylates phosphatidylinositol (PI) in the first committed step in the production of the second messenger inositol-1,4,5,-trisphosphate (PIP). May play an important role in the inner ear development. In Xenopus laevis (African clawed frog), this protein is Phosphatidylinositol 4-kinase beta (pi4kb).